A 608-amino-acid chain; its full sequence is Membrane protein insertase YidC (608 aa).

The chain crosses the membrane as a helical span at residues 8–28 (LLLATALSFLVILGWYFFFPP). The tract at residues 33 to 61 (PQPATEVTETAPQGDTTAPAAAPSAGAAT) is disordered. 5 consecutive transmembrane segments (helical) span residues 378 to 398 (MGVA…PLAY), 448 to 468 (LPIL…FVTL), 482 to 502 (LSVP…WAAP), 506 to 526 (SLLS…SMWV), and 542 to 562 (IFAW…SGLV).

It belongs to the OXA1/ALB3/YidC family. Type 1 subfamily. As to quaternary structure, interacts with the Sec translocase complex via SecD. Specifically interacts with transmembrane segments of nascent integral membrane proteins during membrane integration.

It is found in the cell inner membrane. Required for the insertion and/or proper folding and/or complex formation of integral membrane proteins into the membrane. Involved in integration of membrane proteins that insert both dependently and independently of the Sec translocase complex, as well as at least some lipoproteins. Aids folding of multispanning membrane proteins. This Ruegeria sp. (strain TM1040) (Silicibacter sp.) protein is Membrane protein insertase YidC.